Reading from the N-terminus, the 215-residue chain is Large ribosomal subunit protein uL4 (215 aa).

Residues 46-76 (TAKSKNRAEVSGGGRKPWAQKGGGRARAGSI) are disordered. The segment covering 56-71 (SGGGRKPWAQKGGGRA) has biased composition (gly residues).

The protein belongs to the universal ribosomal protein uL4 family. As to quaternary structure, part of the 50S ribosomal subunit.

Its function is as follows. One of the primary rRNA binding proteins, this protein initially binds near the 5'-end of the 23S rRNA. It is important during the early stages of 50S assembly. It makes multiple contacts with different domains of the 23S rRNA in the assembled 50S subunit and ribosome. Functionally, forms part of the polypeptide exit tunnel. This chain is Large ribosomal subunit protein uL4, found in Helicobacter pylori (strain HPAG1).